Here is a 395-residue protein sequence, read N- to C-terminus: MTAYDMEKEWSRISITAAKIHQNNDFEGFTYQDFRTHVPIMDKDGFAAQTERCLERNERNCLIGFTSGTSGNIKRCYYYYDCEVDEDSSLSNVFRSNGFILPGDRCANLFTINLFSALNNTITMMAGNCGAHVVSVGDITLVTKSHFEALNSIKLNVLLGVPSTILQFINAMQHNGVHINIEKVVFTGESLKTFQKKIIRQAFGEQVSIVGVYGSSEGGILGFTNSPCHTEYEFLSDKYFIEKEGDSILITSLTRENFTPLLRYRLGDTATLSMKGDKLYLTDIQREDMSFNFMGNLIGLGIIQQTIKQTLGRSLEIQVHLSVTEERKELVTVFVQASEVDEDERVRIETAIADIPDIKEAYQKNQGTVSVLRKDARDYAVSERGKMLYIIDRRN.

The protein belongs to the ATP-dependent AMP-binding enzyme family.

The enzyme catalyses (indol-3-yl)acetate + L-lysine + ATP = N(6)-[(indole-3-yl)acetyl]-L-lysine + ADP + phosphate + H(+). In terms of biological role, conversion of IAA to IAA-lysine. The chain is Indoleacetate--lysine synthetase (iaaL) from Pseudomonas savastanoi (Pseudomonas syringae pv. savastanoi).